Here is a 384-residue protein sequence, read N- to C-terminus: Prostaglandin E synthase 2 (384 aa).

Topologically, residues Met-1–Arg-56 are lumenal. Residues Leu-57–His-73 form a helical membrane-spanning segment. Over Thr-74 to Asp-384 the chain is Cytoplasmic. The Glutaredoxin domain occupies Ser-89–Lys-192. Glutathione contacts are provided by residues Val-147 and Asp-163–Ser-164. Residues Tyr-262–His-376 form the GST C-terminal domain.

The protein belongs to the GST superfamily. In terms of assembly, homodimer. Interacts with EXOSC10. May interact with CEBPB. In terms of processing, synthesized as a Golgi membrane-associated protein, and the proteolytic removal of the N-terminal hydrophobic domain leads to the formation of a mature cytosolic enzyme. Widely expressed. Expressed in brain, heart, liver, colon and lung.

It is found in the golgi apparatus membrane. Its subcellular location is the nucleus. It localises to the cytoplasm. The enzyme catalyses prostaglandin H2 = prostaglandin E2. It carries out the reaction prostaglandin H2 = (12S)-hydroxy-(5Z,8E,10E)-heptadecatrienoate + malonaldehyde. Its pathway is lipid metabolism; prostaglandin biosynthesis. With respect to regulation, isomerase activity is increased by sulfhydril compounds. Dithiothreitol (DTT) is most effective, followed by glutathione (GSH) and 2-mercaptoethanol. In terms of biological role, isomerase that catalyzes the conversion of PGH2 into the more stable prostaglandin E2 (PGE2) (in vitro). The biological function and the GSH-dependent property of PTGES2 is still under debate. In vivo, PTGES2 could form a complex with GSH and heme and would not participate in PGE2 synthesis but would catalyze the degradation of prostaglandin E2 H2 (PGH2) to 12(S)-hydroxy-5(Z),8(E),10(E)-heptadecatrienoic acid (HHT) and malondialdehyde (MDA). May also have transactivation activity toward IFN-gamma (IFNG), possibly via an interaction with CEBPB; however, the relevance of transcription activation activity remains unclear. The sequence is that of Prostaglandin E synthase 2 (Ptges2) from Mus musculus (Mouse).